We begin with the raw amino-acid sequence, 439 residues long: MVMEVTETERWCVVTGGRGFAARHLVEMLVRYQMFHVRIADLAPAIVLNPHEETGILGEAIRSGRVQYVSADLRNKTQVVKGFQGAEVVFHMAAPDSSINNHQLQYSVNVQGTTNVIDACIEVGVKRLIYTSSPSVVFDGVHGTLNADESLPYPPKHNDSYSATKAEGEALILKANGRSGLLTCCIRPSSIFGPGDKLMVPSLVTAARAGKSKFIIGDGSNFYDFTYVENVVHAHVCAERALASGGEVCAKAAGQAYFITNMEPIKFWEFMSQLLEGLGYERPSIKIPASLMMPIAYLVELAYKLLGPYGMKVPVLTPSRVRLLSCNRTFDSSKAKDRLGYSPVVPLQEGIKRTIDSFSHLKAQNQPKTEVTETIQWKKQTLIAIVILITLYHNFVATTGSSSVIITAVSKVLLVSSIFMFINGILPEKMKVFGSKKID.

16–21 (GGRGFA) is a binding site for NAD(+). N-linked (GlcNAc...) asparagine glycans are attached at residues Asn-75 and Asn-158. NAD(+) is bound by residues Tyr-161 and Lys-165. Residue Lys-165 is the Proton donor of the active site. An N-linked (GlcNAc...) asparagine glycan is attached at Asn-327. The region spanning 371 to 439 (VTETIQWKKQ…MKVFGSKKID (69 aa)) is the Reticulon; atypical domain. The next 2 membrane-spanning stretches (helical) occupy residues 381–401 (TLIA…TTGS) and 405–425 (IITA…INGI).

Belongs to the 3-beta-HSD family.

It localises to the endoplasmic reticulum membrane. It catalyses the reaction a 3beta-hydroxysteroid-4alpha-carboxylate + NAD(+) = a 3-oxosteroid + CO2 + NADH. The catalysed reaction is 4alpha-carboxy-4beta,14alpha-dimethyl-9beta,19-cyclo-5alpha-ergost-24(24(1))-en-3beta-ol + NAD(+) = cycloeucalenone + CO2 + NADH. The protein operates within steroid biosynthesis; zymosterol biosynthesis; zymosterol from lanosterol: step 4/6. 3beta-hydroxysteroid-dehydrogenase/decarboxylase involved in sterol synthesis. Catalyzes the formation of 3-oxosteroids from 3beta-hydroxysteroids-4alpha-carboxylate. Involved in the regulation of inflorescence internodes and leaves growth, probably by affecting auxin transporter activity possibly by altering sterol composition in the membranes. The sequence is that of 3beta-hydroxysteroid-dehydrogenase/decarboxylase isoform 1 from Arabidopsis thaliana (Mouse-ear cress).